Reading from the N-terminus, the 462-residue chain is Phosphoglycerate kinase, chloroplastic (462 aa).

The N-terminal 61 residues, methionine 1–alanine 61, are a transit peptide targeting the chloroplast. 11 residues coordinate (2R)-3-phosphoglycerate: alanine 83, aspartate 84, asparagine 86, arginine 101, serine 123, histidine 124, glycine 126, arginine 127, arginine 183, histidine 215, and arginine 216. ADP is bound at residue glycine 261. Residue glycine 261 coordinates CDP. Residues lysine 263 and lysine 267 each coordinate AMP. Residue lysine 267 coordinates ATP. ADP is bound at residue glycine 285. Residue glycine 285 participates in CDP binding. Residues glycine 286 and glycine 358 each coordinate AMP. ATP-binding residues include glycine 286 and glycine 358. Residues glycine 383 and phenylalanine 388 each coordinate CDP. Position 388 (phenylalanine 388) interacts with ADP. Residue glutamate 389 coordinates AMP. Residues glutamate 389, aspartate 420, and serine 421 each coordinate ATP. A Mg(2+)-binding site is contributed by aspartate 420.

The protein belongs to the phosphoglycerate kinase family. As to quaternary structure, monomer. Mg(2+) serves as cofactor.

The protein localises to the plastid. It is found in the chloroplast. The catalysed reaction is (2R)-3-phosphoglycerate + ATP = (2R)-3-phospho-glyceroyl phosphate + ADP. Its pathway is carbohydrate biosynthesis; Calvin cycle. This chain is Phosphoglycerate kinase, chloroplastic (PGK), found in Volvox carteri (Green alga).